A 338-amino-acid polypeptide reads, in one-letter code: Ferrochelatase (338 aa).

Residues histidine 202 and glutamate 283 each contribute to the Fe cation site.

It belongs to the ferrochelatase family.

The protein resides in the cytoplasm. The catalysed reaction is heme b + 2 H(+) = protoporphyrin IX + Fe(2+). It participates in porphyrin-containing compound metabolism; protoheme biosynthesis; protoheme from protoporphyrin-IX: step 1/1. In terms of biological role, catalyzes the ferrous insertion into protoporphyrin IX. The polypeptide is Ferrochelatase (Acinetobacter baumannii (strain AB307-0294)).